We begin with the raw amino-acid sequence, 114 residues long: Ghrelin (114 aa).

The signal sequence occupies residues 1 to 24 (MNFGKAAIFGVVLFCLLWTEGAQA). The O-decanoyl threonine; alternate moiety is linked to residue T27. T27 is lipidated: O-octanoyl threonine; alternate. Positions 55 to 114 (GVEDDLAGEEIGVTFPLDMKMTQEQFQKQRAAVQDFLYSSLLSLGSVQDTEDKNENPQSQ) are cleaved as a propeptide — removed in mature form.

The protein belongs to the motilin family. In terms of processing, O-octanoylated by GOAT/MBOAT4. O-octanoylation or O-decanoylation is essential for activity. The O-decanoylated form ghrelin-27-C10 differs in the length of the carbon backbone of the carboxylic acid bound to Thr-27. 33% of frog ghrelin is O-decanoylated. Post-translationally, 80% of frog ghrelin has Asn-52 cleaved from its C-terminus giving rise to ghrelin-27. In terms of tissue distribution, high levels in stomach. Moderate levels in small intestine, pancreas and testis. Low levels in heart, lung and gall bladder.

The protein resides in the secreted. In terms of biological role, ligand for growth hormone secretagogue receptor type 1 (GHSR). Induces the release of growth hormone from the pituitary. Has an appetite-stimulating effect, induces adiposity and stimulates gastric acid secretion. Involved in growth regulation. The protein is Ghrelin (GHRL) of Aquarana catesbeiana (American bullfrog).